The primary structure comprises 410 residues: Sprouty-related, EVH1 domain-containing protein 2 (410 aa).

A WH1 domain is found at 5–122; it reads THPDDDSYIV…RGVRKAIEDL (118 aa). The segment at 127–171 is disordered; sequence TTSSSTLHNEAELGDDDVFTTATDSSSNSSQKREPTTRTISSPTS. A compositionally biased stretch (polar residues) spans 146-156; the sequence is TTATDSSSNSS. The KBD domain occupies 197–252; the sequence is SYPQVTFPEDDEEIVRINPREKIWMTGYEDYRHAPVRGKYLDTTEDADSYVRFAKG. Phosphotyrosine occurs at positions 224 and 227. A disordered region spans residues 274–294; sequence DPKGSVIKTQPPRAKSRRRKE. The SPR domain occupies 300–408; it reads RCVYCRDMFN…CRCCGGKHKA (109 aa).

Homodimer and heterodimer. Able to interact with SPRED1 to form heterodimers. Interacts with RAS. May interact with ZDHHC13 (via ANK repeats) and ZDHHC17 (via ANK repeats). Interacts with TESK1. Interacts with NF1. Post-translationally, phosphorylated on serine and threonine residues. Phosphorylated on tyrosine. Phosphorylation of Tyr-224 and Tyr-227 are required for ubiquitination. Ubiquitinated; leading to degradation by the proteasome. In terms of tissue distribution, predominantly expressed in lung, liver and testis. In testis, it is specially found in mature spermatids projecting into the lumen of the seminiferous. Strongly expressed in glandular epithelia. Also expressed in embryonic tissues such as heart, lung, liver and brain.

The protein resides in the cell membrane. It is found in the cytoplasmic vesicle. The protein localises to the secretory vesicle membrane. Its subcellular location is the cytoplasm. Functionally, negatively regulates Ras signaling pathways and downstream activation of MAP kinases. Recruits and translocates NF1 to the cell membrane, thereby enabling NF1-dependent hydrolysis of active GTP-bound Ras to inactive GDP-bound Ras. Inhibits fibroblast growth factor (FGF)-induced retinal lens fiber differentiation, probably by inhibiting FGF-mediated phosphorylation of ERK1/2. Inhibits TGFB-induced epithelial-to-mesenchymal transition in lens epithelial cells. The polypeptide is Sprouty-related, EVH1 domain-containing protein 2 (Spred2) (Mus musculus (Mouse)).